The primary structure comprises 262 residues: Transmembrane protein 270 (262 aa).

The next 5 helical transmembrane spans lie at 6–26, 30–50, 67–87, 92–112, and 127–147; these read LVRS…ALLI, AHLY…LLGL, PVGR…CLAL, LVWA…KWLG, and LFLS…LLVW. A disordered region spans residues 226-262; the sequence is QEAEPQKALGLSSETPPPGPPAPGARPVLPEPGTPGE. The segment covering 240 to 262 has biased composition (pro residues); that stretch reads TPPPGPPAPGARPVLPEPGTPGE.

The protein resides in the membrane. This Bos taurus (Bovine) protein is Transmembrane protein 270.